Reading from the N-terminus, the 1002-residue chain is Carboxypeptidase Y (1002 aa).

The signal sequence occupies residues 1–18 (MLMKQTFLYFLLTCVVSA). Residues 19–521 (QFNGYVPPEQ…AYLEMLKAEG (503 aa)) constitute a propeptide that is removed on maturation. 3 disordered regions span residues 51-91 (QEES…TALE), 124-436 (DEDE…NMQS), and 527-546 (AFRD…ADSS). 2 stretches are compositionally biased toward basic and acidic residues: residues 63–81 (PERD…HEFN) and 127–143 (EHVR…EDAP). Residues 144–170 (RRKHGKCKGKGKHHKGKHAKGKGKKSH) are compositionally biased toward basic residues. Residues 171-205 (PKPEDDSVFFDDERPKHHEFDDEDREFPAHHEPGE) are compositionally biased toward basic and acidic residues. Tandem repeats lie at residues 225–237 (MHHE…PPPP), 238–250 (MHHE…PPPP), 251–263 (MHHE…PPPP), 264–276 (MHHE…PPPP), 277–289 (MHHE…PPPP), 290–302 (MHHE…PPPP), 303–315 (MHHE…PPPP), 316–328 (MHHE…PPPP), 329–341 (MHHE…PPPP), 361–369 (DKEHHKGPK), 370–378 (DKEHHKGPK), 379–387 (DKEHHKGPK), 388–396 (DKEHHKGPK), 397–405 (DKEHHKGPK), and 406–414 (DKEHHKGPK). The interval 225–341 (MHHEPGEHMP…EPGEHMPPPP (117 aa)) is 9 X 13 AA tandem repeats of M-H-H-E-P-G-E-H-M-P-P-P-P. The span at 343-431 (KHHELEEHEG…PKEKHNERPE (89 aa)) shows a compositional bias: basic and acidic residues. The 7 X 9 AA tandem repeats of D-K-E-H-H-K-G-P-K stretch occupies residues 361-423 (DKEHHKGPKD…KDKEHHQGPK (63 aa)). The 2-7; approximate repeat unit spans residues 415–423 (DKEHHQGPK). Disulfide bonds link cysteine 627–cysteine 880, cysteine 776–cysteine 789, cysteine 799–cysteine 822, cysteine 806–cysteine 815, and cysteine 844–cysteine 851. N-linked (GlcNAc...) asparagine glycosylation occurs at asparagine 659. Residue serine 715 is part of the active site. Residue aspartate 921 is part of the active site. Cysteine 924 provides a ligand contact to substrate. Histidine 978 is an active-site residue. Methionine 979 is a substrate binding site.

It belongs to the peptidase S10 family. Heterodimer of two subunits of 32 kDa and 19 kDa derived from the precursor protein and linked by a disulfide bond.

It localises to the vacuole. It catalyses the reaction Release of a C-terminal amino acid with broad specificity.. Involved in degradation of small peptides. Digests preferentially peptides containing an aliphatic or hydrophobic residue in P1' position, as well as methionine, leucine or phenylalanine in P1 position of ester substrate. This is Carboxypeptidase Y (cpy1) from Schizosaccharomyces pombe (strain 972 / ATCC 24843) (Fission yeast).